The following is a 513-amino-acid chain: uncharacterized protein (513 aa).

5 helical membrane passes run 262-282 (FAIF…FWQL), 304-324 (YMFL…ITYH), 341-361 (EPIP…FEAL), 382-402 (LVIG…VIIV), and 429-449 (MFLA…ILVL). A disordered region spans residues 489–513 (PGTYSRGNGQKGAKREDPKDEENNI). Over residues 501 to 513 (AKREDPKDEENNI) the composition is skewed to basic and acidic residues.

The protein belongs to the GerABKA family.

The protein resides in the cell membrane. This is an uncharacterized protein from Bacillus subtilis (strain 168).